Here is a 398-residue protein sequence, read N- to C-terminus: Acetate kinase (398 aa).

Position 10 (N10) interacts with Mg(2+). K17 provides a ligand contact to ATP. R91 is a binding site for substrate. D148 (proton donor/acceptor) is an active-site residue. ATP contacts are provided by residues 208–212, 283–285, and 331–335; these read HLGNG, DCR, and GIGEN. Residue E385 coordinates Mg(2+).

Belongs to the acetokinase family. As to quaternary structure, homodimer. It depends on Mg(2+) as a cofactor. The cofactor is Mn(2+).

It localises to the cytoplasm. It carries out the reaction acetate + ATP = acetyl phosphate + ADP. It functions in the pathway metabolic intermediate biosynthesis; acetyl-CoA biosynthesis; acetyl-CoA from acetate: step 1/2. Catalyzes the formation of acetyl phosphate from acetate and ATP. Can also catalyze the reverse reaction. In Shewanella woodyi (strain ATCC 51908 / MS32), this protein is Acetate kinase.